A 156-amino-acid chain; its full sequence is 6,7-dimethyl-8-ribityllumazine synthase (156 aa).

5-amino-6-(D-ribitylamino)uracil contacts are provided by residues F23, 57–59 (AFE), and 81–83 (TVI). 86–87 (ST) lines the (2S)-2-hydroxy-3-oxobutyl phosphate pocket. The active-site Proton donor is the H89. Residue F114 participates in 5-amino-6-(D-ribitylamino)uracil binding. R128 contributes to the (2S)-2-hydroxy-3-oxobutyl phosphate binding site.

The protein belongs to the DMRL synthase family. In terms of assembly, forms an icosahedral capsid composed of 60 subunits, arranged as a dodecamer of pentamers.

The enzyme catalyses (2S)-2-hydroxy-3-oxobutyl phosphate + 5-amino-6-(D-ribitylamino)uracil = 6,7-dimethyl-8-(1-D-ribityl)lumazine + phosphate + 2 H2O + H(+). The protein operates within cofactor biosynthesis; riboflavin biosynthesis; riboflavin from 2-hydroxy-3-oxobutyl phosphate and 5-amino-6-(D-ribitylamino)uracil: step 1/2. In terms of biological role, catalyzes the formation of 6,7-dimethyl-8-ribityllumazine by condensation of 5-amino-6-(D-ribitylamino)uracil with 3,4-dihydroxy-2-butanone 4-phosphate. This is the penultimate step in the biosynthesis of riboflavin. The chain is 6,7-dimethyl-8-ribityllumazine synthase from Halalkalibacterium halodurans (strain ATCC BAA-125 / DSM 18197 / FERM 7344 / JCM 9153 / C-125) (Bacillus halodurans).